The chain runs to 363 residues: Adenosine deaminase (363 aa).

Residues His-42 and His-44 each contribute to the Zn(2+) site. Residues 44 to 46 (HLD), Asp-172, and Gly-201 each bind a purine D-ribonucleoside. A gating helix loop; regulates binding affinity for substrates and thus substrate selectivity region spans residues 170-184 (IGDTGHRAADIKASA). A Zn(2+)-binding site is contributed by His-226. Glu-229, His-253, and Asp-310 together coordinate a purine D-ribonucleoside. Asp-310 is a Zn(2+) binding site.

This sequence belongs to the metallo-dependent hydrolases superfamily. Adenosine and AMP deaminases family. Zn(2+) serves as cofactor.

It catalyses the reaction adenosine + H2O + H(+) = inosine + NH4(+). The catalysed reaction is S-methyl-5'-thioadenosine + H2O + H(+) = S-methyl-5'-thioinosine + NH4(+). It participates in purine metabolism; purine nucleoside salvage. Inhibited by coformycin and methylthiocoformycin (MT-coformycin). In terms of biological role, catalyzes the hydrolytic deamination of adenosine to produce inosine. Unlike mammalian adenosine deaminases, also catalyzes the deamination of 5'-methylthioadenosine (MTA), a by-product of polyamine biosynthesis, to produce 5'-methylthioinosine (MTI). Plays an essential role in the purine salvage pathway which allows the parasite to use host cell purines for the synthesis of nucleic acids. This chain is Adenosine deaminase, found in Plasmodium knowlesi.